A 518-amino-acid polypeptide reads, in one-letter code: Mitochondrial distribution and morphology protein 34 (518 aa).

The SMP-LTD domain maps to 1–198; that stretch reads MSFKVNWNTL…LPTLIHRLSL (198 aa). 2 disordered regions span residues 335 to 369 and 491 to 518; these read SRPK…SEMS and IPDV…PYQV. Over residues 336–350 the composition is skewed to basic residues; sequence RPKRRVIKLGSKKSS. Basic and acidic residues predominate over residues 492–506; that stretch reads PDVKSHPGTGRKLDT.

This sequence belongs to the MDM34 family. Component of the ER-mitochondria encounter structure (ERMES) or MDM complex, composed of MMM1, MDM10, MDM12 and MDM34.

It is found in the mitochondrion outer membrane. Component of the ERMES/MDM complex, which serves as a molecular tether to connect the endoplasmic reticulum (ER) and mitochondria. Components of this complex are involved in the control of mitochondrial shape and protein biogenesis, and function in nonvesicular lipid trafficking between the ER and mitochondria. MDM34 is required for the interaction of the ER-resident membrane protein MMM1 and the outer mitochondrial membrane-resident beta-barrel protein MDM10. The sequence is that of Mitochondrial distribution and morphology protein 34 from Meyerozyma guilliermondii (strain ATCC 6260 / CBS 566 / DSM 6381 / JCM 1539 / NBRC 10279 / NRRL Y-324) (Yeast).